Here is a 683-residue protein sequence, read N- to C-terminus: DNA ligase (683 aa).

Residues 44–48 (DAEYD), 93–94 (SL), and E127 contribute to the NAD(+) site. K129 serves as the catalytic N6-AMP-lysine intermediate. Residues R150, E187, K302, and K326 each coordinate NAD(+). Zn(2+)-binding residues include C420, C423, C438, and C444. Residues 601-683 (RVGGRLAGLT…SKLLATGGNQ (83 aa)) enclose the BRCT domain.

It belongs to the NAD-dependent DNA ligase family. LigA subfamily. Requires Mg(2+) as cofactor. Mn(2+) is required as a cofactor.

The enzyme catalyses NAD(+) + (deoxyribonucleotide)n-3'-hydroxyl + 5'-phospho-(deoxyribonucleotide)m = (deoxyribonucleotide)n+m + AMP + beta-nicotinamide D-nucleotide.. Its function is as follows. DNA ligase that catalyzes the formation of phosphodiester linkages between 5'-phosphoryl and 3'-hydroxyl groups in double-stranded DNA using NAD as a coenzyme and as the energy source for the reaction. It is essential for DNA replication and repair of damaged DNA. This Trichlorobacter lovleyi (strain ATCC BAA-1151 / DSM 17278 / SZ) (Geobacter lovleyi) protein is DNA ligase.